Reading from the N-terminus, the 257-residue chain is 1-(5-phosphoribosyl)-5-[(5-phosphoribosylamino)methylideneamino] imidazole-4-carboxamide isomerase (257 aa).

The active-site Proton acceptor is D8. The active-site Proton donor is D131.

Belongs to the HisA/HisF family.

The protein resides in the cytoplasm. It catalyses the reaction 1-(5-phospho-beta-D-ribosyl)-5-[(5-phospho-beta-D-ribosylamino)methylideneamino]imidazole-4-carboxamide = 5-[(5-phospho-1-deoxy-D-ribulos-1-ylimino)methylamino]-1-(5-phospho-beta-D-ribosyl)imidazole-4-carboxamide. It functions in the pathway amino-acid biosynthesis; L-histidine biosynthesis; L-histidine from 5-phospho-alpha-D-ribose 1-diphosphate: step 4/9. In Nitrosospira multiformis (strain ATCC 25196 / NCIMB 11849 / C 71), this protein is 1-(5-phosphoribosyl)-5-[(5-phosphoribosylamino)methylideneamino] imidazole-4-carboxamide isomerase.